A 492-amino-acid polypeptide reads, in one-letter code: ATP synthase subunit beta, chloroplastic (492 aa).

170-177 is an ATP binding site; it reads GGAGVGKT.

Belongs to the ATPase alpha/beta chains family. F-type ATPases have 2 components, CF(1) - the catalytic core - and CF(0) - the membrane proton channel. CF(1) has five subunits: alpha(3), beta(3), gamma(1), delta(1), epsilon(1). CF(0) has four main subunits: a(1), b(1), b'(1) and c(9-12).

The protein localises to the plastid. It localises to the chloroplast thylakoid membrane. The catalysed reaction is ATP + H2O + 4 H(+)(in) = ADP + phosphate + 5 H(+)(out). Its function is as follows. Produces ATP from ADP in the presence of a proton gradient across the membrane. The catalytic sites are hosted primarily by the beta subunits. The protein is ATP synthase subunit beta, chloroplastic of Anthoceros angustus (Hornwort).